We begin with the raw amino-acid sequence, 513 residues long: 2,3-bisphosphoglycerate-independent phosphoglycerate mutase (513 aa).

Positions 15 and 65 each coordinate Mn(2+). The Phosphoserine intermediate role is filled by serine 65. Substrate-binding positions include histidine 126, 156 to 157 (RD), arginine 188, arginine 194, 263 to 266 (RADR), and lysine 337. Positions 402, 406, 443, 444, and 461 each coordinate Mn(2+).

The protein belongs to the BPG-independent phosphoglycerate mutase family. As to quaternary structure, monomer. The cofactor is Mn(2+).

It carries out the reaction (2R)-2-phosphoglycerate = (2R)-3-phosphoglycerate. Its pathway is carbohydrate degradation; glycolysis; pyruvate from D-glyceraldehyde 3-phosphate: step 3/5. Functionally, catalyzes the interconversion of 2-phosphoglycerate and 3-phosphoglycerate. The protein is 2,3-bisphosphoglycerate-independent phosphoglycerate mutase of Moorella thermoacetica (strain ATCC 39073 / JCM 9320).